The sequence spans 205 residues: Outer-membrane lipoprotein LolB (205 aa).

The first 17 residues, 1 to 17, serve as a signal peptide directing secretion; the sequence is MFLRHVIVFSFIALLAG. A lipid anchor (N-palmitoyl cysteine) is attached at Cys18. Residue Cys18 is the site of S-diacylglycerol cysteine attachment.

The protein belongs to the LolB family. As to quaternary structure, monomer.

The protein localises to the cell outer membrane. Its function is as follows. Plays a critical role in the incorporation of lipoproteins in the outer membrane after they are released by the LolA protein. The chain is Outer-membrane lipoprotein LolB from Pseudomonas fluorescens (strain Pf0-1).